A 237-amino-acid chain; its full sequence is Undecaprenyl-diphosphatase (237 aa).

The next 7 helical transmembrane spans lie at 38–58, 65–85, 92–112, 126–146, 166–186, 191–211, and 217–237; these read QTAV…LDGI, WRII…GVLF, LFSS…ILMF, MSFL…FPGI, ALQY…ILGL, VTIL…YVLS, and GKIW…YLAG.

Belongs to the UppP family.

It localises to the cell inner membrane. The catalysed reaction is di-trans,octa-cis-undecaprenyl diphosphate + H2O = di-trans,octa-cis-undecaprenyl phosphate + phosphate + H(+). Catalyzes the dephosphorylation of undecaprenyl diphosphate (UPP). Confers resistance to bacitracin. In Thermotoga maritima (strain ATCC 43589 / DSM 3109 / JCM 10099 / NBRC 100826 / MSB8), this protein is Undecaprenyl-diphosphatase.